A 256-amino-acid chain; its full sequence is MTYLTRILETKAREVAELKKLKPERRYREACGDLPATRDFRSAITSRDGGINLIAEVKKASPSRGVLVEDFRPLDIAARYAELGASAFSVLTDSHYFQGSPDYLKAITQQFSIPVLRKEFIIDESQIYETRLMGADAALLIVAALEPSQLRDYLQLFAELGLHALVEVHDRRELDIAIEQGSTIVGVNNRDLRDFTVDLMTSVNLKREYPEGVLSVAESGLKRRDDVLLMQDAGFDAVLIGEGLLASEELRQFSWG.

This sequence belongs to the TrpC family.

It catalyses the reaction 1-(2-carboxyphenylamino)-1-deoxy-D-ribulose 5-phosphate + H(+) = (1S,2R)-1-C-(indol-3-yl)glycerol 3-phosphate + CO2 + H2O. It participates in amino-acid biosynthesis; L-tryptophan biosynthesis; L-tryptophan from chorismate: step 4/5. This chain is Indole-3-glycerol phosphate synthase, found in Chlorobaculum tepidum (strain ATCC 49652 / DSM 12025 / NBRC 103806 / TLS) (Chlorobium tepidum).